The chain runs to 115 residues: U3-lycotoxin-Ls1u (115 aa).

A signal peptide spans 1–20; that stretch reads MKFVLLFGVLLVTLFSYSSA. Positions 21–44 are excised as a propeptide; that stretch reads EMLDDFDQADEDELLSLIEKEEAR. 3 disulfide bridges follow: C48–C63, C55–C72, and C62–C87.

It belongs to the neurotoxin 19 (CSTX) family. 01 subfamily. Expressed by the venom gland.

The protein resides in the secreted. This chain is U3-lycotoxin-Ls1u, found in Lycosa singoriensis (Wolf spider).